Reading from the N-terminus, the 1051-residue chain is SWI/SNF-related matrix-associated actin-dependent regulator of chromatin subfamily A member 5 (1051 aa).

A compositionally biased stretch (pro residues) spans 1–15 (MSSAVEPPPPPPPES). The interval 1–81 (MSSAVEPPPP…IQEPDPTYEE (81 aa)) is disordered. Serine 2 carries the N-acetylserine modification. Over residues 24-38 (GAGGSSSGNKGGPEG) the composition is skewed to gly residues. Residues 39 to 53 (GAAPAAPCAAGSGPA) show a composition bias toward low complexity. Position 55 is a phosphothreonine (threonine 55). Serine 65 bears the Phosphoserine mark. Residues 68–81 (KQKEIQEPDPTYEE) show a composition bias toward basic and acidic residues. A Glycyl lysine isopeptide (Lys-Gly) (interchain with G-Cter in SUMO2) cross-link involves residue lysine 82. Phosphothreonine is present on threonine 112. Serine 115, serine 136, and serine 170 each carry phosphoserine. In terms of domain architecture, Helicase ATP-binding spans 191 to 356 (ISLYENGING…WSLLNFLLPD (166 aa)). Position 204 to 211 (204 to 211 (DEMGLGKT)) interacts with ATP. The DEAH box signature appears at 307–310 (DEAH). N6-acetyllysine is present on lysine 439. In terms of domain architecture, Helicase C-terminal spans 486 to 637 (VLDKLLPKLK…SIVIQQGRLV (152 aa)). Residues lysine 643, lysine 646, lysine 693, lysine 721, and lysine 734 each participate in a glycyl lysine isopeptide (Lys-Gly) (interchain with G-Cter in SUMO2) cross-link. Serine 754 carries the phosphoserine modification. 2 consecutive SANT domains span residues 839 to 891 (QGFT…ERCN) and 942 to 1006 (KGKN…LITL). Residue lysine 965 forms a Glycyl lysine isopeptide (Lys-Gly) (interchain with G-Cter in SUMO2) linkage. Residues 1014–1051 (LEEKEKAEKKKRGPKPSTQKRKMDGAPDGRGRKKKLKL) are disordered. Over residues 1022–1033 (KKKRGPKPSTQK) the composition is skewed to basic residues. Basic and acidic residues predominate over residues 1034–1043 (RKMDGAPDGR).

This sequence belongs to the SNF2/RAD54 helicase family. ISWI subfamily. In terms of assembly, component of the ACF-5 ISWI chromatin-remodeling complex (also called the ACF/WCRF complex) at least composed of SMARCA5/SNF2H and BAZ1A/ACF1, which regulates the spacing of histone octamers on the DNA template to facilitate access to DNA. Within the complex interacts with BAZ1A/ACF1; the interaction is direct and is required to slide nucleosomes from end to center positions on a DNA template in an ATP-dependent manner. Component of the CHRAC ISWI chromatin-remodeling complex at least composed of SMARCA5/SNF2H, BAZ1A/ACF1, CHRAC1 and POLE3; the complex preferentially binds DNA through the CHRAC1-POLE3 heterodimer and possesses ATP-dependent nucleosome-remodeling activity. Within the complex interacts with BAZ1A/ACF1; the interaction is direct and promotes the interaction with the POLE3-CHRAC1 heterodimer. Within the complex interacts with the POLE3-CHRAC1 heterodimer; the interaction is direct and enhances nucleosome sliding activity by the SMARCA5/SNF2H and BAZ1A/ACF1 interaction. Neither POLE3 nor CHRAC1 enhances nucleosome sliding activity of the ACF-5 ISWI chromatin remodeling complex. Component of the WICH-5 ISWI chromatin-remodeling complex (also called the WICH complex) at least composed of SMARCA5/SNF2H and BAZ1B/WSTF, which regulates the spacing of histone octamers on the DNA template to facilitate access to DNA. Within the complex interacts with BAZ1B/WSTF. Component of the NoRC-5 ISWI chromatin-remodeling complex (also called the NoRC chromatin-remodeling complex) at least composed of SMARCA5/SNF2H and BAZ2A/TIP5; the complex suppresses rDNA transcription by a combination of nucleosome remodeling, histone deacetylation, and DNA methylation. Within the complex interacts with BAZ2A/TIP5. Within the complex interacts with HDAC1. Component of the BRF-5 ISWI chromatin-remodeling complex at least composed of SMARCA5/SNF2H and BAZ2B. Within the complex interacts with BAZ2B. Component of the NURF-5 ISWI chromatin-remodeling complex at least composed of SMARCA5/SNF2H and BPTF. Within the complex interacts with BPFT. Component of the CERF-5 ISWI chromatin-remodeling complex at least composed of SMARCA5/SNF2H and CECR2. LUZP1 is detected as part of the CERF-5 complex in embryonic stem cells where it is involved in complex stabilization but is not detected in the complex in the testis. Component of the RSF-5 ISWI chromatin-remodeling complex (also called the RSF complex) at least composed of SMARCA5/SNF2H and RSF1. Within the complex interacts with RSF1. Interacts with the cohesin complex component RAD21; the interaction is direct. Interacts with the NuRD complex components HDAC2, RBBP4 and CHD4; the interactions are direct. Interacts with PCNA. Component of the B-WICH complex, at least composed of SMARCA5/SNF2H, BAZ1B/WSTF, SF3B1, DEK, MYO1C, ERCC6, MYBBP1A and DDX21 which positively regulates RNA polymerase III transcription. Interacts with MYO1C. Interacts with BEND3. Interacts with SIRT6; promoting recruitment to DNA damage sites. As to expression, ubiquitously expressed.

The protein resides in the nucleus. The protein localises to the chromosome. The enzyme catalyses ATP + H2O = ADP + phosphate + H(+). Functionally, ATPase that possesses intrinsic ATP-dependent nucleosome-remodeling activity. Catalytic subunit of ISWI chromatin-remodeling complexes, which form ordered nucleosome arrays on chromatin and facilitate access to DNA during DNA-templated processes such as DNA replication, transcription, and repair; this may require intact histone H4 tails. Within the ISWI chromatin-remodeling complexes, slides edge- and center-positioned histone octamers away from their original location on the DNA template. Catalytic activity and histone octamer sliding propensity is regulated and determined by components of the ISWI chromatin-remodeling complexes. The BAZ1A/ACF1-, BAZ1B/WSTF-, BAZ2A/TIP5- and BAZ2B-containing ISWI chromatin-remodeling complexes regulate the spacing of nucleosomes along the chromatin and have the ability to slide mononucleosomes to the center of a DNA template in an ATP-dependent manner. The CECR2- and RSF1-containing ISWI chromatin-remodeling complexes do not have the ability to slide mononucleosomes to the center of a DNA template. Binds to core histones together with RSF1, and is required for the assembly of regular nucleosome arrays by the RSF-5 ISWI chromatin-remodeling complex. Involved in DNA replication and together with BAZ1A/ACF1 is required for replication of pericentric heterochromatin in S-phase. Probably plays a role in repression of RNA polymerase I dependent transcription of the rDNA locus, through the recruitment of the SIN3/HDAC1 corepressor complex to the rDNA promoter. The WICH-5 ISWI chromatin-remodeling complex regulates the transcription of various genes, has a role in RNA polymerase I and RNA polymerase III transcription, mediates the histone H2AX phosphorylation at 'Tyr-142', and is involved in the maintenance of chromatin structures during DNA replication processes. Essential component of the NoRC-5 ISWI chromatin-remodeling complex, a complex that mediates silencing of a fraction of rDNA by recruiting histone-modifying enzymes and DNA methyltransferases, leading to heterochromatin formation and transcriptional silencing. Required for embryonic development and differentiation, and the proliferation of early blastocyst-derived stem cells. This is SWI/SNF-related matrix-associated actin-dependent regulator of chromatin subfamily A member 5 (Smarca5) from Mus musculus (Mouse).